The primary structure comprises 327 residues: Methionyl-tRNA formyltransferase (327 aa).

121–124 (SLLP) contributes to the (6S)-5,6,7,8-tetrahydrofolate binding site.

The protein belongs to the Fmt family.

The catalysed reaction is L-methionyl-tRNA(fMet) + (6R)-10-formyltetrahydrofolate = N-formyl-L-methionyl-tRNA(fMet) + (6S)-5,6,7,8-tetrahydrofolate + H(+). Its function is as follows. Attaches a formyl group to the free amino group of methionyl-tRNA(fMet). The formyl group appears to play a dual role in the initiator identity of N-formylmethionyl-tRNA by promoting its recognition by IF2 and preventing the misappropriation of this tRNA by the elongation apparatus. The sequence is that of Methionyl-tRNA formyltransferase from Burkholderia vietnamiensis (strain G4 / LMG 22486) (Burkholderia cepacia (strain R1808)).